Here is a 611-residue protein sequence, read N- to C-terminus: DNA mismatch repair protein MutL (611 aa).

It belongs to the DNA mismatch repair MutL/HexB family.

Functionally, this protein is involved in the repair of mismatches in DNA. It is required for dam-dependent methyl-directed DNA mismatch repair. May act as a 'molecular matchmaker', a protein that promotes the formation of a stable complex between two or more DNA-binding proteins in an ATP-dependent manner without itself being part of a final effector complex. In Borrelia garinii subsp. bavariensis (strain ATCC BAA-2496 / DSM 23469 / PBi) (Borreliella bavariensis), this protein is DNA mismatch repair protein MutL.